The sequence spans 245 residues: 1-(5-phosphoribosyl)-5-[(5-phosphoribosylamino)methylideneamino] imidazole-4-carboxamide isomerase (245 aa).

The Proton acceptor role is filled by Asp-11. The active-site Proton donor is Asp-132.

Belongs to the HisA/HisF family.

It is found in the cytoplasm. It catalyses the reaction 1-(5-phospho-beta-D-ribosyl)-5-[(5-phospho-beta-D-ribosylamino)methylideneamino]imidazole-4-carboxamide = 5-[(5-phospho-1-deoxy-D-ribulos-1-ylimino)methylamino]-1-(5-phospho-beta-D-ribosyl)imidazole-4-carboxamide. It functions in the pathway amino-acid biosynthesis; L-histidine biosynthesis; L-histidine from 5-phospho-alpha-D-ribose 1-diphosphate: step 4/9. The sequence is that of 1-(5-phosphoribosyl)-5-[(5-phosphoribosylamino)methylideneamino] imidazole-4-carboxamide isomerase from Geobacillus kaustophilus (strain HTA426).